The sequence spans 167 residues: CASP-like protein UU1 (167 aa).

The Cytoplasmic segment spans residues 1-17 (MVELESQEAVTVASTAD). The helical transmembrane segment at 18-38 (IAVDVSLRLLAAATSLASAVV) threads the bilayer. Residues 39–54 (VAANHQQRWGVRVDFT) are Extracellular-facing. The chain crosses the membrane as a helical span at residues 55-75 (LFQVWIGFVAVNLVCTVYAAA). Topologically, residues 76-94 (TAAAARKAMGRWWLHHADA) are cytoplasmic. A helical transmembrane segment spans residues 95–115 (VVVNLEAAATAGAGAIGSIAM). The Extracellular portion of the chain corresponds to 116–135 (WGNEASGWYAVCRLYRRYCN). Residues 136-156 (AGAAALALSLAAVLLLGVACA) traverse the membrane as a helical segment. At 157 to 167 (RSRYPKMPPTT) the chain is on the cytoplasmic side.

The protein belongs to the Casparian strip membrane proteins (CASP) family. Homodimer and heterodimers.

Its subcellular location is the cell membrane. The chain is CASP-like protein UU1 from Oryza sativa subsp. indica (Rice).